We begin with the raw amino-acid sequence, 166 residues long: PTS system glucose-specific EIIA component (166 aa).

The PTS EIIA type-1 domain occupies 34–138 (DPVFAQKMMG…SIISPIIITN (105 aa)). Residues His-71 and His-86 each coordinate Zn(2+). Catalysis depends on His-86, which acts as the Tele-phosphohistidine intermediate; for EIIA activity. His-86 is modified (phosphohistidine; by HPr).

Heterodimer with glycerol kinase (glpk). Zn(2+) serves as cofactor.

The protein resides in the cytoplasm. In terms of biological role, the phosphoenolpyruvate-dependent sugar phosphotransferase system (sugar PTS), a major carbohydrate active transport system, catalyzes the phosphorylation of incoming sugar substrates concomitantly with their translocation across the cell membrane. The enzyme II complex composed of PtsG and Crr is involved in glucose transport. The polypeptide is PTS system glucose-specific EIIA component (crr) (Staphylococcus epidermidis (strain ATCC 35984 / DSM 28319 / BCRC 17069 / CCUG 31568 / BM 3577 / RP62A)).